Consider the following 310-residue polypeptide: tRNA uridine(34) hydroxylase (310 aa).

One can recognise a Rhodanese domain in the interval 124-218 (SDPEVLLIDT…YFEEVPQEES (95 aa)). The Cysteine persulfide intermediate role is filled by Cys-178.

This sequence belongs to the TrhO family.

The enzyme catalyses uridine(34) in tRNA + AH2 + O2 = 5-hydroxyuridine(34) in tRNA + A + H2O. Functionally, catalyzes oxygen-dependent 5-hydroxyuridine (ho5U) modification at position 34 in tRNAs. The chain is tRNA uridine(34) hydroxylase from Pseudomonas putida (strain GB-1).